Reading from the N-terminus, the 432-residue chain is Probable exopolygalacturonase X (432 aa).

An N-terminal signal peptide occupies residues Met-1–Gly-23. Asn-113, Asn-129, and Asn-199 each carry an N-linked (GlcNAc...) asparagine glycan. A PbH1 1 repeat occupies Ser-231 to Pro-252. Asp-245 serves as the catalytic Proton donor. Cys-247 and Cys-264 are joined by a disulfide. N-linked (GlcNAc...) asparagine glycosylation is found at Asn-253 and Asn-265. PbH1 repeat units follow at residues Ser-254 to Ser-274, Val-285 to Val-306, and Val-327 to Gln-348. Residue His-268 is part of the active site. N-linked (GlcNAc...) asparagine glycans are attached at residues Asn-292, Asn-297, Asn-329, Asn-354, and Asn-364. The PbH1 5 repeat unit spans residues Pro-362–Ser-394. Cys-392 and Cys-398 are oxidised to a cystine.

The protein belongs to the glycosyl hydrolase 28 family.

The protein localises to the secreted. The catalysed reaction is [(1-&gt;4)-alpha-D-galacturonosyl](n) + H2O = alpha-D-galacturonate + [(1-&gt;4)-alpha-D-galacturonosyl](n-1). Its function is as follows. Specific in hydrolyzing the terminal glycosidic bond of polygalacturonic acid and oligogalacturonates. The chain is Probable exopolygalacturonase X (pgaX) from Aspergillus fumigatus (strain CBS 144.89 / FGSC A1163 / CEA10) (Neosartorya fumigata).